A 95-amino-acid chain; its full sequence is Aspartyl/glutamyl-tRNA(Asn/Gln) amidotransferase subunit C (95 aa).

The protein belongs to the GatC family. As to quaternary structure, heterotrimer of A, B and C subunits.

It carries out the reaction L-glutamyl-tRNA(Gln) + L-glutamine + ATP + H2O = L-glutaminyl-tRNA(Gln) + L-glutamate + ADP + phosphate + H(+). The enzyme catalyses L-aspartyl-tRNA(Asn) + L-glutamine + ATP + H2O = L-asparaginyl-tRNA(Asn) + L-glutamate + ADP + phosphate + 2 H(+). In terms of biological role, allows the formation of correctly charged Asn-tRNA(Asn) or Gln-tRNA(Gln) through the transamidation of misacylated Asp-tRNA(Asn) or Glu-tRNA(Gln) in organisms which lack either or both of asparaginyl-tRNA or glutaminyl-tRNA synthetases. The reaction takes place in the presence of glutamine and ATP through an activated phospho-Asp-tRNA(Asn) or phospho-Glu-tRNA(Gln). In Desulfosudis oleivorans (strain DSM 6200 / JCM 39069 / Hxd3) (Desulfococcus oleovorans), this protein is Aspartyl/glutamyl-tRNA(Asn/Gln) amidotransferase subunit C.